The following is a 446-amino-acid chain: tRNA modification GTPase MnmE (446 aa).

3 residues coordinate (6S)-5-formyl-5,6,7,8-tetrahydrofolate: Arg23, Glu81, and Lys120. Positions 216–370 (GFKVAIIGKP…LIKELELILD (155 aa)) constitute a TrmE-type G domain. Position 226 (Asn226) interacts with K(+). GTP contacts are provided by residues 226–231 (NVGKSS), 245–251 (SDIAGTT), and 270–273 (DTAG). Ser230 contacts Mg(2+). Positions 245, 247, and 250 each coordinate K(+). Residue Thr251 participates in Mg(2+) binding. Lys446 provides a ligand contact to (6S)-5-formyl-5,6,7,8-tetrahydrofolate.

The protein belongs to the TRAFAC class TrmE-Era-EngA-EngB-Septin-like GTPase superfamily. TrmE GTPase family. In terms of assembly, homodimer. Heterotetramer of two MnmE and two MnmG subunits. It depends on K(+) as a cofactor.

It is found in the cytoplasm. Its function is as follows. Exhibits a very high intrinsic GTPase hydrolysis rate. Involved in the addition of a carboxymethylaminomethyl (cmnm) group at the wobble position (U34) of certain tRNAs, forming tRNA-cmnm(5)s(2)U34. The polypeptide is tRNA modification GTPase MnmE (Aliarcobacter butzleri (strain RM4018) (Arcobacter butzleri)).